We begin with the raw amino-acid sequence, 113 residues long: ATP-dependent Clp protease adapter protein ClpS (113 aa).

The protein belongs to the ClpS family. Binds to the N-terminal domain of the chaperone ClpA.

Involved in the modulation of the specificity of the ClpAP-mediated ATP-dependent protein degradation. The sequence is that of ATP-dependent Clp protease adapter protein ClpS from Corynebacterium diphtheriae (strain ATCC 700971 / NCTC 13129 / Biotype gravis).